The following is a 96-amino-acid chain: Large ribosomal subunit protein uL23 (96 aa).

This sequence belongs to the universal ribosomal protein uL23 family. In terms of assembly, part of the 50S ribosomal subunit. Contacts protein L29, and trigger factor when it is bound to the ribosome.

Its function is as follows. One of the early assembly proteins it binds 23S rRNA. One of the proteins that surrounds the polypeptide exit tunnel on the outside of the ribosome. Forms the main docking site for trigger factor binding to the ribosome. This chain is Large ribosomal subunit protein uL23, found in Halalkalibacterium halodurans (strain ATCC BAA-125 / DSM 18197 / FERM 7344 / JCM 9153 / C-125) (Bacillus halodurans).